The sequence spans 134 residues: Transcription antitermination protein NusB (134 aa).

The protein belongs to the NusB family.

Functionally, involved in transcription antitermination. Required for transcription of ribosomal RNA (rRNA) genes. Binds specifically to the boxA antiterminator sequence of the ribosomal RNA (rrn) operons. This is Transcription antitermination protein NusB from Shewanella sp. (strain W3-18-1).